Consider the following 563-residue polypeptide: Beta-catenin-like protein 1 (563 aa).

The residue at position 1 (Met-1) is an N-acetylmethionine. Residues 1–81 (MDVGELLSYQ…EEEEPLDESS (81 aa)) are disordered. A Nuclear localization signal motif is present at residues 16-33 (KRPRDDEEEELKTRRKQT). The segment covering 34–45 (GPRERGRYREDE) has biased composition (basic and acidic residues). A compositionally biased stretch (acidic residues) spans 66–78 (DGEEEEEEEEPLD). 2 HEAT repeats span residues 79-129 (ESSV…VVAT) and 134-176 (YHLL…TLHE). Position 91 is an N6-acetyllysine (Lys-91). Positions 130–140 (MPDLYHLLVEL) match the Nuclear export signal (NES) motif. ARM repeat units lie at residues 178 to 228 (EEGA…MAEF), 229 to 273 (RPEM…LQDN), 274 to 323 (DENR…CLML), 325 to 363 (SNRERFLKGEGLQLMNLMLREKKISRSSALKVLDHAMIG), and 364 to 417 (PEGA…LLRN). Phosphoserine is present on Ser-389. Residues 476–540 (DMEDEFYLRR…HIIKEYAENI (65 aa)) are a coiled coil. Ser-545 carries the post-translational modification Phosphoserine.

In terms of assembly, component of the PRP19-CDC5L splicing complex composed of a core complex comprising a homotetramer of PRPF19, CDC5L, PLRG1 and BCAS2, and at least three less stably associated proteins CTNNBL1, CWC15 and HSPA8. Interacts directly with CWC15 and CDC5L in the complex. Interacts with AICDA; the interaction is important for the antibody diversification activity of AICDA. Interacts with PRPF31 (via its NLS). Interacts (via its N-terminal NLS) with KPNA1 and KPNA2.

It localises to the nucleus. In terms of biological role, component of the PRP19-CDC5L complex that forms an integral part of the spliceosome and is required for activating pre-mRNA splicing. Participates in AID/AICDA-mediated somatic hypermutation (SHM) and class-switch recombination (CSR), 2 processes resulting in the production of high-affinity, mutated isotype-switched antibodies. This is Beta-catenin-like protein 1 (Ctnnbl1) from Rattus norvegicus (Rat).